Reading from the N-terminus, the 101-residue chain is NAD(P)H-quinone oxidoreductase subunit 4L, chloroplastic (101 aa).

3 consecutive transmembrane segments (helical) span residues 2-22 (MLEH…YGLI), 32-52 (MCLE…SDFF), and 61-81 (IFSI…SAIV).

This sequence belongs to the complex I subunit 4L family. In terms of assembly, NDH is composed of at least 16 different subunits, 5 of which are encoded in the nucleus.

The protein localises to the plastid. It is found in the chloroplast thylakoid membrane. The enzyme catalyses a plastoquinone + NADH + (n+1) H(+)(in) = a plastoquinol + NAD(+) + n H(+)(out). It carries out the reaction a plastoquinone + NADPH + (n+1) H(+)(in) = a plastoquinol + NADP(+) + n H(+)(out). Its function is as follows. NDH shuttles electrons from NAD(P)H:plastoquinone, via FMN and iron-sulfur (Fe-S) centers, to quinones in the photosynthetic chain and possibly in a chloroplast respiratory chain. The immediate electron acceptor for the enzyme in this species is believed to be plastoquinone. Couples the redox reaction to proton translocation, and thus conserves the redox energy in a proton gradient. This is NAD(P)H-quinone oxidoreductase subunit 4L, chloroplastic from Citrus sinensis (Sweet orange).